The primary structure comprises 481 residues: 3-isopropylmalate dehydratase large subunit (481 aa).

[4Fe-4S] cluster-binding residues include Cys363, Cys423, and Cys426. A disordered region spans residues 434-465 (LRPGQRAASTSNRNFEGRQGRGGRTHLVSPPV).

This sequence belongs to the aconitase/IPM isomerase family. LeuC type 1 subfamily. Heterodimer of LeuC and LeuD. [4Fe-4S] cluster is required as a cofactor.

The enzyme catalyses (2R,3S)-3-isopropylmalate = (2S)-2-isopropylmalate. Its pathway is amino-acid biosynthesis; L-leucine biosynthesis; L-leucine from 3-methyl-2-oxobutanoate: step 2/4. Functionally, catalyzes the isomerization between 2-isopropylmalate and 3-isopropylmalate, via the formation of 2-isopropylmaleate. In Salinispora tropica (strain ATCC BAA-916 / DSM 44818 / JCM 13857 / NBRC 105044 / CNB-440), this protein is 3-isopropylmalate dehydratase large subunit.